The primary structure comprises 242 residues: Small ribosomal subunit protein uS2 (242 aa).

This sequence belongs to the universal ribosomal protein uS2 family.

The protein is Small ribosomal subunit protein uS2 of Vibrio parahaemolyticus serotype O3:K6 (strain RIMD 2210633).